Here is a 293-residue protein sequence, read N- to C-terminus: Nitrogenase iron protein (293 aa).

10–17 lines the ATP pocket; that stretch reads GKGGIGKS. Cys-98 provides a ligand contact to [4Fe-4S] cluster. ADP-ribosylarginine; by dinitrogenase reductase ADP-ribosyltransferase is present on Arg-101. Cys-133 contacts [4Fe-4S] cluster.

This sequence belongs to the NifH/BchL/ChlL family. Homodimer. [4Fe-4S] cluster is required as a cofactor. Post-translationally, the reversible ADP-ribosylation of Arg-101 inactivates the nitrogenase reductase and regulates nitrogenase activity.

It carries out the reaction N2 + 8 reduced [2Fe-2S]-[ferredoxin] + 16 ATP + 16 H2O = H2 + 8 oxidized [2Fe-2S]-[ferredoxin] + 2 NH4(+) + 16 ADP + 16 phosphate + 6 H(+). Its function is as follows. The key enzymatic reactions in nitrogen fixation are catalyzed by the nitrogenase complex, which has 2 components: the iron protein and the molybdenum-iron protein. The polypeptide is Nitrogenase iron protein (Klebsiella pneumoniae (strain 342)).